The primary structure comprises 1145 residues: Nucleolar protein 6 (1145 aa).

The disordered stretch occupies residues 1–46 (MQKKRNRAGPPQQEAASDDGEMSDSSDKMEVAQGKGKSAVKRAPDA).

The protein belongs to the NRAP family. Part of the small subunit (SSU) processome, composed of more than 70 proteins and the RNA chaperone small nucleolar RNA (snoRNA) U3.

The protein resides in the nucleus. It is found in the nucleolus. It localises to the chromosome. Its function is as follows. Part of the small subunit (SSU) processome, first precursor of the small eukaryotic ribosomal subunit. During the assembly of the SSU processome in the nucleolus, many ribosome biogenesis factors, an RNA chaperone and ribosomal proteins associate with the nascent pre-rRNA and work in concert to generate RNA folding, modifications, rearrangements and cleavage as well as targeted degradation of pre-ribosomal RNA by the RNA exosome. This chain is Nucleolar protein 6 (nol6), found in Xenopus tropicalis (Western clawed frog).